Consider the following 196-residue polypeptide: Pro-FMRFamide-related neuropeptide VF (196 aa).

The signal sequence occupies residues 1–26 (MEIISSKLFILLTLATSSLLTSNIFC). Residues 27–55 (ADELVMSNLHSKENYDKYSEPRGYPKGER) constitute a propeptide that is removed on maturation. The residue at position 92 (Phe-92) is a Phenylalanine amide. Propeptides lie at residues 95–99 (NVQEE) and 115–121 (NMEVSLV). Phe-131 is modified (phenylalanine amide). A propeptide spanning residues 134 to 196 (TTTAKSVCRM…IDDAELKQEK (63 aa)) is cleaved from the precursor.

The protein belongs to the FARP (FMRFamide related peptide) family. As to expression, specifically expressed in the retina. Detected in the hypothalamus.

Its subcellular location is the secreted. Efficiently inhibits forskolin-induced production of cAMP. Acts as a potent negative regulator of gonadotropin synthesis and secretion. Induces secretion of prolactin. Its function is as follows. Efficiently inhibits forskolin-induced production of cAMP. Blocks morphine-induced analgesia. Functionally, shows no inhibitory activity of forskolin-induced production of cAMP. The polypeptide is Pro-FMRFamide-related neuropeptide VF (Homo sapiens (Human)).